A 492-amino-acid polypeptide reads, in one-letter code: WD repeat-containing protein JIP5 (492 aa).

5 WD repeats span residues 127–166, 178–217, 236–274, 276–317, and 365–405; these read RHKG…VVKK, KKND…LSNS, RSAY…ILIS, DQED…LEDQ, and RNHN…VEEN. Composition is skewed to acidic residues over residues 404 to 414 and 422 to 433; these read ENASVESDSDE and DLSDDTSSDDET. The disordered stretch occupies residues 404–472; the sequence is ENASVESDSD…SKSVKKRKIM (69 aa). The segment covering 449 to 462 has biased composition (basic and acidic residues); the sequence is KDLKEDHQEEKESN.

It belongs to the WD repeat WDR55 family. As to quaternary structure, interacts with BRE1, BUD27 and GIS1.

It localises to the nucleus. The protein resides in the nucleolus. In Saccharomyces cerevisiae (strain YJM789) (Baker's yeast), this protein is WD repeat-containing protein JIP5 (JIP5).